We begin with the raw amino-acid sequence, 97 residues long: MDKIHLYDKILSPMVTEKTTNLSEQNKIVFKVPRAANKTNLKKNIEKIFKVNVTKINIINKQNRTKVARGKKVNVQGYKKAIITLKKGQSIDLTSGI.

The protein belongs to the universal ribosomal protein uL23 family. Part of the 50S ribosomal subunit. Contacts protein L29, and trigger factor when it is bound to the ribosome.

Functionally, one of the early assembly proteins it binds 23S rRNA. One of the proteins that surrounds the polypeptide exit tunnel on the outside of the ribosome. Forms the main docking site for trigger factor binding to the ribosome. The sequence is that of Large ribosomal subunit protein uL23 from Pelagibacter ubique (strain HTCC1062).